The chain runs to 161 residues: Phosphopantetheine adenylyltransferase (161 aa).

Ser-8 is a binding site for substrate. ATP contacts are provided by residues 8 to 9 (SF) and His-16. The substrate site is built by Lys-40, Leu-72, and Arg-86. ATP contacts are provided by residues 87–89 (GLR), Glu-97, and 122–128 (FSFVSSS).

It belongs to the bacterial CoaD family. In terms of assembly, homohexamer. The cofactor is Mg(2+).

The protein localises to the cytoplasm. It catalyses the reaction (R)-4'-phosphopantetheine + ATP + H(+) = 3'-dephospho-CoA + diphosphate. It functions in the pathway cofactor biosynthesis; coenzyme A biosynthesis; CoA from (R)-pantothenate: step 4/5. Its function is as follows. Reversibly transfers an adenylyl group from ATP to 4'-phosphopantetheine, yielding dephospho-CoA (dPCoA) and pyrophosphate. This chain is Phosphopantetheine adenylyltransferase, found in Thermotoga neapolitana (strain ATCC 49049 / DSM 4359 / NBRC 107923 / NS-E).